We begin with the raw amino-acid sequence, 190 residues long: Protein GrpE (190 aa).

Residues 1 to 31 (MTETPNTSSEEIQTSEPSSDNELQTLQQENA) show a composition bias toward polar residues. Residues 1–34 (MTETPNTSSEEIQTSEPSSDNELQTLQQENANLK) form a disordered region.

It belongs to the GrpE family. As to quaternary structure, homodimer.

The protein localises to the cytoplasm. Its function is as follows. Participates actively in the response to hyperosmotic and heat shock by preventing the aggregation of stress-denatured proteins, in association with DnaK and GrpE. It is the nucleotide exchange factor for DnaK and may function as a thermosensor. Unfolded proteins bind initially to DnaJ; upon interaction with the DnaJ-bound protein, DnaK hydrolyzes its bound ATP, resulting in the formation of a stable complex. GrpE releases ADP from DnaK; ATP binding to DnaK triggers the release of the substrate protein, thus completing the reaction cycle. Several rounds of ATP-dependent interactions between DnaJ, DnaK and GrpE are required for fully efficient folding. This is Protein GrpE from Chlamydia muridarum (strain MoPn / Nigg).